The following is a 34-amino-acid chain: Voltage sensor toxin 3 (34 aa).

3 disulfide bridges follow: Cys2/Cys17, Cys9/Cys22, and Cys16/Cys29.

Belongs to the neurotoxin 10 (Hwtx-1) family. 61 (VSTX3) subfamily. In terms of tissue distribution, expressed by the venom gland.

Its subcellular location is the secreted. Its function is as follows. Potent voltage-gated sodium channel blocker (IC(50)=190 nM and 210 nM on human and rat Nav1.3/SCN3A respectively, 430 nM on human Nav1.7/SCN9A, 770 nM and 290 nM on human and rat Nav1.8/SCN10A, respectively). Binds the voltage-sensor domain of the potassium channel KvAP (from Aeropyrum pernix) and weakly inhibits this channel. The polypeptide is Voltage sensor toxin 3 (Grammostola rosea (Chilean rose tarantula)).